Reading from the N-terminus, the 430-residue chain is Neuropeptide FF receptor 1 (430 aa).

Positions 1–20 (MEGEPSQPPNSSWPLSQNGT) are disordered. At 1 to 43 (MEGEPSQPPNSSWPLSQNGTNTEATPATNLTFSSYYQHTSPVA) the chain is on the extracellular side. The span at 9–20 (PNSSWPLSQNGT) shows a compositional bias: polar residues. N-linked (GlcNAc...) asparagine glycosylation is found at N10, N18, and N29. A helical transmembrane segment spans residues 44-64 (AMFIVAYALIFLLCMVGNTLV). Residues 65–80 (CFIVLKNRHMHTVTNM) lie on the Cytoplasmic side of the membrane. The chain crosses the membrane as a helical span at residues 81 to 101 (FILNLAVSDLLVGIFCMPTTL). Over 102–117 (VDNLITGWPFDNATCK) the chain is Extracellular. The N-linked (GlcNAc...) asparagine glycan is linked to N113. The cysteines at positions 116 and 203 are disulfide-linked. The helical transmembrane segment at 118–138 (MSGLVQGMSVSASVFTLVAIA) threads the bilayer. At 139-158 (VERFRCIVHPFREKLTLRKA) the chain is on the cytoplasmic side. Residues 159-179 (LVTIAVIWALALLIMCPSAVT) traverse the membrane as a helical segment. Topologically, residues 180–214 (LTVTREEHHFMVDARNRSYPLYSCWEAWPEKGMRR) are extracellular. N195 carries an N-linked (GlcNAc...) asparagine glycan. A helical membrane pass occupies residues 215–235 (VYTTVLFSHIYLAPLALIVVM). Topologically, residues 236-271 (YARIARKLCQAPGPAPGGEEAADPRASRRRARVVHM) are cytoplasmic. The chain crosses the membrane as a helical span at residues 272–292 (LVMVALFFTLSWLPLWALLLL). The Extracellular portion of the chain corresponds to 293–307 (IDYGQLSAPQLHLVT). A helical membrane pass occupies residues 308-328 (VYAFPFAHWLAFFNSSANPII). Residues 329–430 (YGYFNENFRR…LPLTIPAWDI (102 aa)) lie on the Cytoplasmic side of the membrane. A compositionally biased stretch (low complexity) spans 379-404 (SDSGLPSESGPSSGAPRPGRLPLRNG). Residues 379-413 (SDSGLPSESGPSSGAPRPGRLPLRNGRVAHHGLPR) form a disordered region.

Belongs to the G-protein coupled receptor 1 family.

It localises to the cell membrane. Functionally, receptor for NPAF (A-18-F-amide) and NPFF (F-8-F-amide) neuropeptides, also known as morphine-modulating peptides. Can also be activated by a variety of naturally occurring or synthetic FMRF-amide like ligands. This receptor mediates its action by association with G proteins that activate a phosphatidylinositol-calcium second messenger system. This is Neuropeptide FF receptor 1 from Homo sapiens (Human).